We begin with the raw amino-acid sequence, 334 residues long: Ribosomal lysine N-methyltransferase 5 (334 aa).

S-adenosyl-L-methionine-binding positions include Trp88, 155 to 157 (GAG), Asp177, Trp227, and Met254.

Belongs to the class I-like SAM-binding methyltransferase superfamily. RKM5 family.

S-adenosyl-L-methionine-dependent protein-lysine N-methyltransferase that methylates 60S ribosomal protein L1. The chain is Ribosomal lysine N-methyltransferase 5 (RKM5) from Lachancea thermotolerans (strain ATCC 56472 / CBS 6340 / NRRL Y-8284) (Yeast).